The primary structure comprises 147 residues: Hemoglobin subunit beta-1 (147 aa).

The 145-residue stretch at 3–147 (NLTAKERQLI…IADALGKGYH (145 aa)) folds into the Globin domain. Histidine 64 and histidine 93 together coordinate heme b.

It belongs to the globin family. In terms of assembly, heterotetramer of two alpha chains and two beta chains. Red blood cells.

Its function is as follows. Involved in oxygen transport from the lung to the various peripheral tissues. The polypeptide is Hemoglobin subunit beta-1 (hbb1) (Xenopus tropicalis (Western clawed frog)).